The following is a 514-amino-acid chain: Activin receptor type-2A (514 aa).

Positions Met-1 to Gly-20 are cleaved as a signal peptide. Topologically, residues Ser-21–Pro-136 are extracellular. 5 disulfide bridges follow: Cys-31/Cys-61, Cys-51/Cys-79, Cys-86/Cys-105, Cys-92/Cys-104, and Cys-106/Cys-111. Residues Asn-46, Asn-67, and Asn-88 are each glycosylated (N-linked (GlcNAc...) asparagine). A helical membrane pass occupies residues Leu-137–Tyr-162. At Arg-163 to Leu-514 the chain is on the cytoplasmic side. Positions Leu-193–Leu-486 constitute a Protein kinase domain. Residues Lys-199 to Val-207 and Lys-220 contribute to the ATP site. Asp-323 (proton acceptor) is an active-site residue.

This sequence belongs to the protein kinase superfamily. TKL Ser/Thr protein kinase family. TGFB receptor subfamily.

It localises to the cell membrane. It carries out the reaction L-threonyl-[receptor-protein] + ATP = O-phospho-L-threonyl-[receptor-protein] + ADP + H(+). The catalysed reaction is L-seryl-[receptor-protein] + ATP = O-phospho-L-seryl-[receptor-protein] + ADP + H(+). Receptor for activin A, activin B and inhibin A. Involved in transmembrane signaling. The sequence is that of Activin receptor type-2A (acvr2a) from Xenopus laevis (African clawed frog).